The primary structure comprises 245 residues: 1-(5-phosphoribosyl)-5-[(5-phosphoribosylamino)methylideneamino] imidazole-4-carboxamide isomerase (245 aa).

D8 acts as the Proton acceptor in catalysis. D130 functions as the Proton donor in the catalytic mechanism.

Belongs to the HisA/HisF family.

It is found in the cytoplasm. It catalyses the reaction 1-(5-phospho-beta-D-ribosyl)-5-[(5-phospho-beta-D-ribosylamino)methylideneamino]imidazole-4-carboxamide = 5-[(5-phospho-1-deoxy-D-ribulos-1-ylimino)methylamino]-1-(5-phospho-beta-D-ribosyl)imidazole-4-carboxamide. It participates in amino-acid biosynthesis; L-histidine biosynthesis; L-histidine from 5-phospho-alpha-D-ribose 1-diphosphate: step 4/9. This chain is 1-(5-phosphoribosyl)-5-[(5-phosphoribosylamino)methylideneamino] imidazole-4-carboxamide isomerase, found in Pseudomonas fluorescens (strain ATCC BAA-477 / NRRL B-23932 / Pf-5).